The following is a 371-amino-acid chain: Cytochrome b (371 aa).

The next 4 helical transmembrane spans lie at 25–45 (FGSMLLTCLALQVLTGFFLAV), 69–90 (WMMQNLHAIGASMFFICIYIHI), 105–125 (WMSGITLLITLMATAFFGYVL), and 170–190 (FFALHFILPFAIISLSSLHII). Residues H75 and H89 each coordinate heme b. The heme b site is built by H174 and H188. Residue H193 participates in a ubiquinone binding. The next 4 helical transmembrane spans lie at 218–238 (HKDLLLLTLMILLLLIIVSFS), 280–300 (LGGALALVMSIMILFTIPFTH), 312–332 (LSQLMFWALISTFVTITWAAT), and 339–358 (FIIISQVTSTLYFTFFLSIP).

Belongs to the cytochrome b family. As to quaternary structure, the cytochrome bc1 complex contains 3 respiratory subunits (MT-CYB, CYC1 and UQCRFS1), 2 core proteins (UQCRC1 and UQCRC2) and probably 6 low-molecular weight proteins. It depends on heme b as a cofactor.

It localises to the mitochondrion inner membrane. Its function is as follows. Component of the ubiquinol-cytochrome c reductase complex (complex III or cytochrome b-c1 complex) that is part of the mitochondrial respiratory chain. The b-c1 complex mediates electron transfer from ubiquinol to cytochrome c. Contributes to the generation of a proton gradient across the mitochondrial membrane that is then used for ATP synthesis. The protein is Cytochrome b (MT-CYB) of Antaresia childreni (Children's python).